The chain runs to 72 residues: Large ribosomal subunit protein bL31 (72 aa).

Cysteine 16, cysteine 18, cysteine 38, and cysteine 41 together coordinate Zn(2+).

This sequence belongs to the bacterial ribosomal protein bL31 family. Type A subfamily. Part of the 50S ribosomal subunit. Zn(2+) is required as a cofactor.

Its function is as follows. Binds the 23S rRNA. This chain is Large ribosomal subunit protein bL31, found in Vibrio atlanticus (strain LGP32) (Vibrio splendidus (strain Mel32)).